Reading from the N-terminus, the 220-residue chain is MSKDSAFAVQYSLRALGQKVRADGVVGSETRAALDALPENQKKAIVELQALLPKAQSVGNNRVRFTTAEVDSAVARISQKIGVPASYYQFLIPIENFVVAGGFETTVSGSFRGLGQFNRQTWDRLRRLGRNLPAFEEGSAQLNASLYAIGFLYLENKRAYEASFKGRVFTHEIAYLYHNQGAPAAEQYLTSGRLVYPKQSEAAVAAVAAARNQHVKESWA.

The protein belongs to the peptidase U40 family. As to quaternary structure, monomer.

The protein resides in the virion. In terms of biological role, muralytic enzyme exposed to host peptidoglycan layer after membrane fusion during viral entry. Functions as an exolysin that cleaves the peptide bridge formed by meso-diaminopimelic acid and D-alanine. Also lyses the host cell late in infection to release the virions. The protein is Peptidoglycan hydrolase gp5 (P5) of Pseudomonas savastanoi pv. phaseolicola (Pseudomonas syringae pv. phaseolicola).